The following is a 208-amino-acid chain: Protein-L-isoaspartate O-methyltransferase (208 aa).

Ser59 is an active-site residue.

It belongs to the methyltransferase superfamily. L-isoaspartyl/D-aspartyl protein methyltransferase family.

The protein localises to the cytoplasm. It catalyses the reaction [protein]-L-isoaspartate + S-adenosyl-L-methionine = [protein]-L-isoaspartate alpha-methyl ester + S-adenosyl-L-homocysteine. Catalyzes the methyl esterification of L-isoaspartyl residues in peptides and proteins that result from spontaneous decomposition of normal L-aspartyl and L-asparaginyl residues. It plays a role in the repair and/or degradation of damaged proteins. This Klebsiella pneumoniae subsp. pneumoniae (strain ATCC 700721 / MGH 78578) protein is Protein-L-isoaspartate O-methyltransferase.